The sequence spans 364 residues: tRNA 2-selenouridine synthase (364 aa).

In terms of domain architecture, Rhodanese spans 14-137 (LLADTPLIDV…LRQTAIQATW (124 aa)). C97 serves as the catalytic S-selanylcysteine intermediate.

It belongs to the SelU family. In terms of assembly, monomer.

The catalysed reaction is 5-methylaminomethyl-2-thiouridine(34) in tRNA + selenophosphate + (2E)-geranyl diphosphate + H2O + H(+) = 5-methylaminomethyl-2-selenouridine(34) in tRNA + (2E)-thiogeraniol + phosphate + diphosphate. It catalyses the reaction 5-methylaminomethyl-2-thiouridine(34) in tRNA + (2E)-geranyl diphosphate = 5-methylaminomethyl-S-(2E)-geranyl-thiouridine(34) in tRNA + diphosphate. The enzyme catalyses 5-methylaminomethyl-S-(2E)-geranyl-thiouridine(34) in tRNA + selenophosphate + H(+) = 5-methylaminomethyl-2-(Se-phospho)selenouridine(34) in tRNA + (2E)-thiogeraniol. It carries out the reaction 5-methylaminomethyl-2-(Se-phospho)selenouridine(34) in tRNA + H2O = 5-methylaminomethyl-2-selenouridine(34) in tRNA + phosphate. Involved in the post-transcriptional modification of the uridine at the wobble position (U34) of tRNA(Lys), tRNA(Glu) and tRNA(Gln). Catalyzes the conversion of 2-thiouridine (S2U-RNA) to 2-selenouridine (Se2U-RNA). Acts in a two-step process involving geranylation of 2-thiouridine (S2U) to S-geranyl-2-thiouridine (geS2U) and subsequent selenation of the latter derivative to 2-selenouridine (Se2U) in the tRNA chain. The sequence is that of tRNA 2-selenouridine synthase from Salmonella agona (strain SL483).